The chain runs to 664 residues: DNA ligase (664 aa).

Residues 32 to 36 (DKEYD) and 80 to 81 (SL) contribute to the NAD(+) site. K122 serves as the catalytic N6-AMP-lysine intermediate. NAD(+)-binding residues include R144, E178, and K314. Positions 407, 410, 423, and 429 each coordinate Zn(2+). In terms of domain architecture, BRCT spans 587–664 (IDENPFMDKT…NEEEFSNKIK (78 aa)).

The protein belongs to the NAD-dependent DNA ligase family. LigA subfamily. It depends on Mg(2+) as a cofactor. Mn(2+) serves as cofactor.

It catalyses the reaction NAD(+) + (deoxyribonucleotide)n-3'-hydroxyl + 5'-phospho-(deoxyribonucleotide)m = (deoxyribonucleotide)n+m + AMP + beta-nicotinamide D-nucleotide.. Functionally, DNA ligase that catalyzes the formation of phosphodiester linkages between 5'-phosphoryl and 3'-hydroxyl groups in double-stranded DNA using NAD as a coenzyme and as the energy source for the reaction. It is essential for DNA replication and repair of damaged DNA. The protein is DNA ligase of Clostridium botulinum (strain Langeland / NCTC 10281 / Type F).